A 699-amino-acid chain; its full sequence is Pollen-specific leucine-rich repeat extensin-like protein 4 (699 aa).

Residues 1–39 (MPFYKQPWVFSKVFVLAMAKPPSFGCCFFLLFFSFLSSS) form the signal peptide. N106 carries an N-linked (GlcNAc...) asparagine glycan. LRR repeat units follow at residues 133–157 (VTVV…LGLM), 158–180 (TDVA…SFEK), 182–205 (KLMH…VLSW), 206–229 (PDVK…LFKK), 231–251 (LDAI…SLGE), 253–275 (PASV…IGNM), 276–299 (KNLN…IGKL), 301–323 (NVTV…FVGL), and 324–347 (TSVE…ICQL). N301 carries N-linked (GlcNAc...) asparagine glycosylation. An N-linked (GlcNAc...) asparagine glycan is attached at N352. The disordered stretch occupies residues 411-699 (KCAGGSSTPS…SPPPPMFAGY (289 aa)). Composition is skewed to pro residues over residues 421-466 (KPSP…PVPT), 482-504 (KPSP…PQPD), 518-659 (PPPA…PPAP), and 690-699 (SPPPPMFAGY). The contains the Ser-Pro(4) repeats stretch occupies residues 517 to 699 (SPPPAPVNSP…SPPPPMFAGY (183 aa)).

Post-translationally, hydroxylated on proline residues in the S-P-P-P-P repeat. In terms of processing, O-glycosylated on hydroxyprolines. Expressed in flowers, stamen, pollen, and pollinated carpels.

Its subcellular location is the secreted. It localises to the cell wall. Functionally, modulates cell morphogenesis by regulating cell wall formation and assembly, and/or growth polarization. This Arabidopsis thaliana (Mouse-ear cress) protein is Pollen-specific leucine-rich repeat extensin-like protein 4 (PEX4).